We begin with the raw amino-acid sequence, 391 residues long: S-adenosylmethionine synthase (391 aa).

A disordered region spans residues 1–20; it reads MPRSDYLFTSESVSEGHPDK. Residue H17 participates in ATP binding. Residue D19 coordinates Mg(2+). A K(+)-binding site is contributed by E45. Positions 58 and 102 each coordinate L-methionine. Positions 102 to 112 are flexible loop; the sequence is QSADIAQGVDA. ATP contacts are provided by residues 169 to 171, 235 to 236, D244, 250 to 251, A267, and K271; these read DAK, KF, and RK. D244 provides a ligand contact to L-methionine. K275 provides a ligand contact to L-methionine.

It belongs to the AdoMet synthase family. Homotetramer; dimer of dimers. Mg(2+) serves as cofactor. The cofactor is K(+).

It is found in the cytoplasm. It carries out the reaction L-methionine + ATP + H2O = S-adenosyl-L-methionine + phosphate + diphosphate. It participates in amino-acid biosynthesis; S-adenosyl-L-methionine biosynthesis; S-adenosyl-L-methionine from L-methionine: step 1/1. Its function is as follows. Catalyzes the formation of S-adenosylmethionine (AdoMet) from methionine and ATP. The overall synthetic reaction is composed of two sequential steps, AdoMet formation and the subsequent tripolyphosphate hydrolysis which occurs prior to release of AdoMet from the enzyme. The chain is S-adenosylmethionine synthase from Methylorubrum extorquens (strain CM4 / NCIMB 13688) (Methylobacterium extorquens).